A 544-amino-acid polypeptide reads, in one-letter code: Homeobox protein B-H1 (544 aa).

Residues 53-70 (STTTMSSGGSTTTASGIG) are compositionally biased toward low complexity. Disordered regions lie at residues 53-73 (STTT…GKPN), 92-179 (YKQQ…PPTA), 236-308 (GGVG…AFTD), and 471-544 (AANP…QIQV). The span at 95–105 (QQHHQQLHHHN) shows a compositional bias: basic residues. Over residues 106–131 (NNNNSGSSGGSSPAHSNNNNNINGDN) the composition is skewed to low complexity. The segment covering 156–172 (THPHTHPHALMHPHGKL) has biased composition (basic residues). Residues 247–262 (DLDDSSDYHEENEDCD) show a composition bias toward acidic residues. The span at 266–282 (MDDHSVCSNGGKDDDGN) shows a compositional bias: basic and acidic residues. Over residues 283 to 293 (SVKSGSTSDMS) the composition is skewed to polar residues. Residues 299–358 (QRKARTAFTDHQLQTLEKSFERQKYLSVQERQELAHKLDLSDCQVKTWYQNRRTKWKRQT) constitute a DNA-binding region (homeobox). The segment covering 476 to 485 (GPHPVAPPPS) has biased composition (pro residues). Low complexity predominate over residues 492 to 506 (PSGLVKPIPAHSASA). The segment covering 507-516 (SPPPRPPSTP) has biased composition (pro residues).

It belongs to the Antp homeobox family. B-H1 and B-H2 are abundant in the eye-antenna imaginal disk. Expressed in R1 and R6 cells throughout larval stage until 30 hours after puparium formation, at which time expression is seen in the anterior and posterior primary pigment cells. Coexpressed in embryonic glial cells, neurons of the CNS and PNS, most latitudinal anterior cells of the developing notum and the central circular region of the leg and antennal imaginal disk throughout larval development.

Its subcellular location is the nucleus. Its function is as follows. B-H1 and B-H2 are regulated by members of the wg signaling pathway; wg and dpp. B-H1 and B-H2 are coexpressed and functionally required in R1 and R6 receptor cells and primary pigment cells for normal eye development. Coexpression is also required for the fate determination of external sensory organs, formation of notal microchaetae, formation of presutural macrochaetae, antennal development and for distal leg morphogenesis; segmentation and specification of tarsal segments 3-5. In Drosophila melanogaster (Fruit fly), this protein is Homeobox protein B-H1 (B-H1).